We begin with the raw amino-acid sequence, 889 residues long: Alanine--tRNA ligase (889 aa).

Residues histidine 574, histidine 578, cysteine 682, and histidine 686 each coordinate Zn(2+).

It belongs to the class-II aminoacyl-tRNA synthetase family. The cofactor is Zn(2+).

It is found in the cytoplasm. It carries out the reaction tRNA(Ala) + L-alanine + ATP = L-alanyl-tRNA(Ala) + AMP + diphosphate. Functionally, catalyzes the attachment of alanine to tRNA(Ala) in a two-step reaction: alanine is first activated by ATP to form Ala-AMP and then transferred to the acceptor end of tRNA(Ala). Also edits incorrectly charged Ser-tRNA(Ala) and Gly-tRNA(Ala) via its editing domain. In Orientia tsutsugamushi (strain Ikeda) (Rickettsia tsutsugamushi), this protein is Alanine--tRNA ligase.